A 66-amino-acid chain; its full sequence is Large ribosomal subunit protein bL35 (66 aa).

It belongs to the bacterial ribosomal protein bL35 family.

The protein is Large ribosomal subunit protein bL35 of Neorickettsia sennetsu (strain ATCC VR-367 / Miyayama) (Ehrlichia sennetsu).